Reading from the N-terminus, the 156-residue chain is Phosphopantetheine adenylyltransferase (156 aa).

A substrate-binding site is contributed by serine 9. Residues 9 to 10 (SF) and histidine 17 each bind ATP. Positions 41, 74, and 88 each coordinate substrate. ATP contacts are provided by residues 89–91 (GLR), glutamate 99, and 123–129 (LLHVSSS).

This sequence belongs to the bacterial CoaD family. Homohexamer. Mg(2+) is required as a cofactor.

It is found in the cytoplasm. It catalyses the reaction (R)-4'-phosphopantetheine + ATP + H(+) = 3'-dephospho-CoA + diphosphate. Its pathway is cofactor biosynthesis; coenzyme A biosynthesis; CoA from (R)-pantothenate: step 4/5. Its function is as follows. Reversibly transfers an adenylyl group from ATP to 4'-phosphopantetheine, yielding dephospho-CoA (dPCoA) and pyrophosphate. This is Phosphopantetheine adenylyltransferase from Kocuria rhizophila (strain ATCC 9341 / DSM 348 / NBRC 103217 / DC2201).